The chain runs to 551 residues: Tripartite motif-containing protein 5 (551 aa).

Ala-2 carries the post-translational modification N-acetylalanine. The RING-type zinc finger occupies 15–55 (CPICLELLTEPLSLDCGHSFCQACITANHKESRERSCPLCR). Ser-82 carries the phosphoserine modification. The B box-type zinc-finger motif lies at 87-128 (QKVDRCARHGEKLLLFCQQHGNVICWLCERSEEHRGHRTSLV). Zn(2+) contacts are provided by Cys-92, His-95, Cys-114, and His-120. A coiled-coil region spans residues 127 to 221 (LVEEVAQKYR…VQSENDMVLQ (95 aa)). The tract at residues 182 to 195 (FKQLRDILDCEESN) is required for interaction with GABARAP and for autophagy. The B30.2/SPRY domain occupies 276 to 551 (PDLKGMLQVF…LPMTLCSPSS (276 aa)).

The protein belongs to the TRIM/RBCC family. Can form homodimers and homotrimers. In addition to lower-order dimerization, also exhibits a higher-order multimerization and both low- and high-order multimerizations are essential for its restriction activity. Interacts with BTBD1 and BTBD2. Interacts with PSMC4, PSMC5, PSMD7 and HSPA8/HSC70. Interacts (via B30.2/SPRY domain) with HSPA1A/B. Interacts with PSMC2, MAP3K7/TAK1, TAB2 and TAB3. Interacts with SQSTM1. Interacts with TRIM6 and TRIM34. Interacts with ULK1 (phosphorylated form), GABARAP, GABARAPL1, GABARAPL2, MAP1LC3A, MAP1LC3C and BECN1. In terms of processing, degraded in a proteasome-independent fashion in the absence of viral infection but in a proteasome-dependent fashion following exposure to restriction sensitive virus. Autoubiquitinated in a RING finger- and UBE2D2-dependent manner. Monoubiquitinated by TRIM21. Deubiquitinated by Yersinia YopJ. Ubiquitination may not lead to proteasomal degradation.

It localises to the cytoplasm. Its subcellular location is the nucleus. It catalyses the reaction S-ubiquitinyl-[E2 ubiquitin-conjugating enzyme]-L-cysteine + [acceptor protein]-L-lysine = [E2 ubiquitin-conjugating enzyme]-L-cysteine + N(6)-ubiquitinyl-[acceptor protein]-L-lysine.. The protein operates within protein modification; protein ubiquitination. Capsid-specific restriction factor that prevents infection from non-host-adapted retroviruses. Blocks viral replication early in the life cycle, after viral entry but before reverse transcription. In addition to acting as a capsid-specific restriction factor, also acts as a pattern recognition receptor that activates innate immune signaling in response to the retroviral capsid lattice. Binding to the viral capsid triggers its E3 ubiquitin ligase activity, and in concert with the heterodimeric ubiquitin conjugating enzyme complex UBE2V1-UBE2N (also known as UBC13-UEV1A complex) generates 'Lys-63'-linked polyubiquitin chains, which in turn are catalysts in the autophosphorylation of the MAP3K7/TAK1 complex (includes TAK1, TAB2, and TAB3). Activation of the MAP3K7/TAK1 complex by autophosphorylation results in the induction and expression of NF-kappa-B and MAPK-responsive inflammatory genes, thereby leading to an innate immune response in the infected cell. Plays a role in regulating autophagy through activation of autophagy regulator BECN1 by causing its dissociation from its inhibitors BCL2 and TAB2. In Alouatta sara (Bolivian red howler monkey), this protein is Tripartite motif-containing protein 5 (TRIM5).